The sequence spans 98 residues: MTLFSSISSISNPMTSSKSSISSFGSGTSIGSNSIACGGCGGGSGGILGSGLGIGLGLGLDLTGGSRTRGSCRGNGGSSNPVNGHGGMGGGNGSCCGI.

2 disordered regions span residues 1–26 (MTLF…SFGS) and 68–98 (TRGS…CCGI). The segment covering 84–98 (GHGGMGGGNGSCCGI) has biased composition (gly residues).

This sequence belongs to the hssA/B family.

The chain is HssA/B-like protein 50 (hssl50) from Dictyostelium discoideum (Social amoeba).